Reading from the N-terminus, the 188-residue chain is NAD(P)H-quinone oxidoreductase subunit J (188 aa).

The span at 1 to 12 (MSETPSKQTAAS) shows a compositional bias: polar residues. Residues 1-23 (MSETPSKQTAASDETGAVVAPEP) form a disordered region.

The protein belongs to the complex I 30 kDa subunit family. As to quaternary structure, NDH-1 can be composed of about 15 different subunits; different subcomplexes with different compositions have been identified which probably have different functions.

It localises to the cellular thylakoid membrane. The catalysed reaction is a plastoquinone + NADH + (n+1) H(+)(in) = a plastoquinol + NAD(+) + n H(+)(out). It catalyses the reaction a plastoquinone + NADPH + (n+1) H(+)(in) = a plastoquinol + NADP(+) + n H(+)(out). Its function is as follows. NDH-1 shuttles electrons from an unknown electron donor, via FMN and iron-sulfur (Fe-S) centers, to quinones in the respiratory and/or the photosynthetic chain. The immediate electron acceptor for the enzyme in this species is believed to be plastoquinone. Couples the redox reaction to proton translocation, and thus conserves the redox energy in a proton gradient. Cyanobacterial NDH-1 also plays a role in inorganic carbon-concentration. In Synechococcus sp. (strain CC9605), this protein is NAD(P)H-quinone oxidoreductase subunit J.